A 517-amino-acid polypeptide reads, in one-letter code: Crotonobetaine/carnitine--CoA ligase (517 aa).

This sequence belongs to the ATP-dependent AMP-binding enzyme family.

The catalysed reaction is 4-(trimethylamino)butanoate + ATP + CoA = 4-(trimethylamino)butanoyl-CoA + AMP + diphosphate. It carries out the reaction crotonobetaine + ATP + CoA = crotonobetainyl-CoA + AMP + diphosphate. It catalyses the reaction (R)-carnitine + ATP + CoA = (R)-carnitinyl-CoA + AMP + diphosphate. It functions in the pathway amine and polyamine metabolism; carnitine metabolism. Catalyzes the transfer of CoA to carnitine, generating the initial carnitinyl-CoA needed for the CaiB reaction cycle. Also has activity toward crotonobetaine and gamma-butyrobetaine. The chain is Crotonobetaine/carnitine--CoA ligase from Escherichia coli (strain K12 / MC4100 / BW2952).